Here is a 98-residue protein sequence, read N- to C-terminus: MPKRKSPEGAEGKDAAKVTKQEPTRRSARLSAKPAPPKPEPKPRKTTKKEPGTKANKGAKGKKDEKQEAAKEGTTPSENGENKAEEAQKTESVGDKNE.

Basic and acidic residues-rich tracts occupy residues 1-25, 39-52, 61-71, and 80-98; these read MPKRKSPEGAEGKDAAKVTKQEPTR, PEPKPRKTTKKEPG, GKKDEKQEAAK, and GENKAEEAQKTESVGDKNE. Residues 1-98 are disordered; the sequence is MPKRKSPEGA…KTESVGDKNE (98 aa).

This sequence belongs to the HMGN family.

It is found in the nucleus. This chain is High mobility group nucleosome-binding domain-containing protein 3 (HMGN3), found in Gallus gallus (Chicken).